A 451-amino-acid chain; its full sequence is Trigger factor (451 aa).

The PPIase FKBP-type domain maps to 163-248 (GDIIDMEYTV…IKALYVNILP (86 aa)).

This sequence belongs to the FKBP-type PPIase family. Tig subfamily.

It is found in the cytoplasm. The catalysed reaction is [protein]-peptidylproline (omega=180) = [protein]-peptidylproline (omega=0). In terms of biological role, involved in protein export. Acts as a chaperone by maintaining the newly synthesized protein in an open conformation. Functions as a peptidyl-prolyl cis-trans isomerase. This is Trigger factor from Leptospira borgpetersenii serovar Hardjo-bovis (strain JB197).